Consider the following 299-residue polypeptide: Probable arylamine N-acetyltransferase 2 (299 aa).

Catalysis depends on Cys75, which acts as the Acyl-thioester intermediate. Residues His115 and Asp130 contribute to the active site.

This sequence belongs to the arylamine N-acetyltransferase family.

The catalysed reaction is an arylamine + acetyl-CoA = an N-acetylarylamine + CoA. This chain is Probable arylamine N-acetyltransferase 2, found in Dictyostelium discoideum (Social amoeba).